Consider the following 418-residue polypeptide: Serine hydroxymethyltransferase (418 aa).

Residues Leu121 and 125–127 each bind (6S)-5,6,7,8-tetrahydrofolate; that span reads GHL. Lys230 carries the post-translational modification N6-(pyridoxal phosphate)lysine. (6S)-5,6,7,8-tetrahydrofolate is bound at residue 356-358; sequence SPF.

The protein belongs to the SHMT family. As to quaternary structure, homodimer. It depends on pyridoxal 5'-phosphate as a cofactor.

It localises to the cytoplasm. It catalyses the reaction (6R)-5,10-methylene-5,6,7,8-tetrahydrofolate + glycine + H2O = (6S)-5,6,7,8-tetrahydrofolate + L-serine. It participates in one-carbon metabolism; tetrahydrofolate interconversion. The protein operates within amino-acid biosynthesis; glycine biosynthesis; glycine from L-serine: step 1/1. In terms of biological role, catalyzes the reversible interconversion of serine and glycine with tetrahydrofolate (THF) serving as the one-carbon carrier. This reaction serves as the major source of one-carbon groups required for the biosynthesis of purines, thymidylate, methionine, and other important biomolecules. Also exhibits THF-independent aldolase activity toward beta-hydroxyamino acids, producing glycine and aldehydes, via a retro-aldol mechanism. The polypeptide is Serine hydroxymethyltransferase (Shewanella halifaxensis (strain HAW-EB4)).